Consider the following 278-residue polypeptide: Alcohol dehydrogenase-related 31 kDa protein (278 aa).

NAD(+) is bound at residue 11 to 34 (YVADCGGIALETSKVLMTKNIAKL). Ser-139 is a substrate binding site. The active-site Proton acceptor is the Tyr-152.

It belongs to the short-chain dehydrogenases/reductases (SDR) family.

The protein is Alcohol dehydrogenase-related 31 kDa protein (Adhr) of Drosophila pseudoobscura pseudoobscura (Fruit fly).